A 125-amino-acid polypeptide reads, in one-letter code: uncharacterized protein (125 aa).

A helical transmembrane segment spans residues 21-43; the sequence is KFSLIALVSFTALAIIVLYHNIS.

It localises to the membrane. This is an uncharacterized protein from Archaeoglobus fulgidus (strain ATCC 49558 / DSM 4304 / JCM 9628 / NBRC 100126 / VC-16).